A 157-amino-acid polypeptide reads, in one-letter code: MTGAVCPGSFDPVTLGHVDVFERAAAQFDEVVVAILVNPAKKGMFDLDERIAMIEESTAHLPNLRVEAGQGLVVDFVKAQGMNAIVKGLRTGTDFEYELQMAQMNKHIAGVDTFFVATAPRYSFVSSSLAKEVAMLGGDVSELLPEPVNRRLRERTK.

Ser9 contributes to the substrate binding site. ATP-binding positions include 9-10 (SF) and His17. The substrate site is built by Lys41, Val73, and Lys87. Residues 88-90 (GLR), Glu98, and 122-128 (YSFVSSS) contribute to the ATP site.

Belongs to the bacterial CoaD family. Homohexamer. Requires Mg(2+) as cofactor.

The protein resides in the cytoplasm. The enzyme catalyses (R)-4'-phosphopantetheine + ATP + H(+) = 3'-dephospho-CoA + diphosphate. Its pathway is cofactor biosynthesis; coenzyme A biosynthesis; CoA from (R)-pantothenate: step 4/5. Functionally, reversibly transfers an adenylyl group from ATP to 4'-phosphopantetheine, yielding dephospho-CoA (dPCoA) and pyrophosphate. This chain is Phosphopantetheine adenylyltransferase, found in Mycobacterium marinum (strain ATCC BAA-535 / M).